The primary structure comprises 320 residues: Cytochrome f (320 aa).

A signal peptide spans 1–35 (MQNRNTFSWVKEPINRSISVLIIIYVITQTSISNA). Heme-binding residues include Y36, C56, C59, and H60. The helical transmembrane segment at 286–306 (VQGLLFFLASVTLAQIFLVLK) threads the bilayer.

It belongs to the cytochrome f family. In terms of assembly, the 4 large subunits of the cytochrome b6-f complex are cytochrome b6, subunit IV (17 kDa polypeptide, petD), cytochrome f and the Rieske protein, while the 4 small subunits are PetG, PetL, PetM and PetN. The complex functions as a dimer. Heme is required as a cofactor.

The protein localises to the plastid. Its subcellular location is the chloroplast thylakoid membrane. Functionally, component of the cytochrome b6-f complex, which mediates electron transfer between photosystem II (PSII) and photosystem I (PSI), cyclic electron flow around PSI, and state transitions. The chain is Cytochrome f from Piper cenocladum (Ant piper).